Reading from the N-terminus, the 251-residue chain is Methylthioribulose-1-phosphate dehydratase (251 aa).

Residues 1 to 26 are disordered; the sequence is MTSVCDATNEDKENGSESTESQDKEH. The segment covering 9–26 has biased composition (basic and acidic residues); sequence NEDKENGSESTESQDKEH. C100 contributes to the substrate binding site. Zn(2+) contacts are provided by H118 and H120. E142 acts as the Proton donor/acceptor in catalysis. H198 is a Zn(2+) binding site. Residues 232–251 form a disordered region; that stretch reads MDPSAPPIEENHYYDVQQSQ.

Belongs to the aldolase class II family. MtnB subfamily. Zn(2+) is required as a cofactor.

Its subcellular location is the cytoplasm. The catalysed reaction is 5-(methylsulfanyl)-D-ribulose 1-phosphate = 5-methylsulfanyl-2,3-dioxopentyl phosphate + H2O. It participates in amino-acid biosynthesis; L-methionine biosynthesis via salvage pathway; L-methionine from S-methyl-5-thio-alpha-D-ribose 1-phosphate: step 2/6. Functionally, catalyzes the dehydration of methylthioribulose-1-phosphate (MTRu-1-P) into 2,3-diketo-5-methylthiopentyl-1-phosphate (DK-MTP-1-P). Functions in the methionine salvage pathway. May play a role in apoptosis. The chain is Methylthioribulose-1-phosphate dehydratase from Salmo salar (Atlantic salmon).